The primary structure comprises 194 residues: Yellow fluorescent protein (194 aa).

2 Lumazine-binding repeats span residues 1–98 and 99–194; these read MFKG…SGGH and ILSA…NQCW. 179 to 183 contacts FMN; sequence KVNVE.

As to quaternary structure, homodimer. It depends on FMN as a cofactor.

Its function is as follows. Antenna protein that modulates the color of the bioluminescence emission of the luciferase. In the presence of YFP and only at temperatures below 20 degrees Celsius, luciferase exhibits a bimodal emission spectrum with a new peak at 545 nM (yellow), in addition to the one at 485 nM. In Aliivibrio fischeri (Vibrio fischeri), this protein is Yellow fluorescent protein (luxY).